The following is a 579-amino-acid chain: Protein inscuteable homolog (579 aa).

An important for interaction with GPSM2 region spans residues S74–E89. The PDZ-binding signature appears at E576–V579.

In terms of assembly, interacts with ALS2CR19/PAR3B and GPSM1/AGS3. Interacts with F2RL2/PAR3. Interacts with GPSM2/LGN (via TPR repeat region). In terms of tissue distribution, expressed in brain, kidney, liver, testis and skin.

Its subcellular location is the cytoplasm. It localises to the cell cortex. In terms of biological role, may function as an adapter linking the Par3 complex to the GPSM1/GPSM2 complex. Involved in spindle orientation during mitosis. May regulate cell proliferation and differentiation in the developing nervous system. May play a role in the asymmetric division of fibroblasts and participate in the process of stratification of the squamous epithelium. This is Protein inscuteable homolog (Insc) from Mus musculus (Mouse).